A 203-amino-acid chain; its full sequence is Snake venom metalloproteinase adamalysin-2 (203 aa).

The Peptidase M12B domain maps to 7 to 203 (RYIELVVVAD…YKPQCILNKP (197 aa)). Residues E10 and D94 each coordinate Ca(2+). Disulfide bonds link C118–C198 and C158–C165. Residue H143 coordinates Zn(2+). E144 is an active-site residue. 2 residues coordinate Zn(2+): H147 and H153. The Ca(2+) site is built by C198 and N201.

The protein belongs to the venom metalloproteinase (M12B) family. P-I subfamily. As to quaternary structure, monomer. Zn(2+) is required as a cofactor. Expressed by the venom gland.

It is found in the secreted. The enzyme catalyses Cleavage of 1-Phe-|-Val-2, 5-His-|-Leu-6, 14-Ala-|-Leu-15, 15-Leu-|-Tyr-16, and 16-Tyr-|-Leu-17 of insulin B chain.. In terms of biological role, has no significant hemorrhagic activity, but inactivates serpins by limited proteolysis of their reactive-site loops. The polypeptide is Snake venom metalloproteinase adamalysin-2 (Crotalus adamanteus (Eastern diamondback rattlesnake)).